Reading from the N-terminus, the 94-residue chain is Lipolysis-activating peptide 1-beta chain (94 aa).

Positions 1-19 (MKILAVVLISVIVLNTANG) are cleaved as a signal peptide. Positions 20–87 (ENYYPQKYTN…YFNALESQCP (68 aa)) constitute an LCN-type CS-alpha/beta domain. Intrachain disulfides connect C34–C56, C42–C66, and C46–C68.

The protein belongs to the long (3 C-C) scorpion toxin superfamily. Homodimer; disulfide-linked or monomer (edited version) or heterodimer of an alpha chain (AC P0CI44 or AC P0CI45) and this beta chain (non-edited version). Expressed by the venom gland.

The protein localises to the secreted. Its function is as follows. The homodimer inhibits HMG-CoA reductase (HMGCR) (32% of inhibition produced by 0.6 uM), a glycoprotein involved in the control of cholesterol biosynthesis. The inhibitory effects of bumarsin are seen at much lower concentrations (0.6 uM) than that for statins such as atorvastatin (5 mM) and simvastatin (10 uM). In addition to inhibition of HMG-CoA reductase, this protein lowers cholesterol levels by inducing steroid hormone synthesis via StAR, and by increasing reverse cholesterol transport mediated by the induction of ABCA1 and APOA1. The heterodimer non-edited LVP1 induces lipolysis in rat adipocytes. Induction of lipolysis by LVP1 appears to be mediated through the beta-2 adrenergic receptor pathway (ADRB2). In terms of biological role, the monomer edited version, similar to alpha-toxins, may modulate voltage-gated sodium channels (Nav) and may block voltage-gated potassium channels (Kv). This Lychas mucronatus (Chinese swimming scorpion) protein is Lipolysis-activating peptide 1-beta chain.